The chain runs to 185 residues: Orotate phosphoribosyltransferase (185 aa).

5-phospho-alpha-D-ribose 1-diphosphate-binding positions include arginine 98, lysine 99, lysine 102, histidine 104, and 128 to 136 (EDVTTTGGS). Orotate-binding residues include threonine 132 and arginine 160.

This sequence belongs to the purine/pyrimidine phosphoribosyltransferase family. PyrE subfamily. As to quaternary structure, homodimer. Mg(2+) serves as cofactor.

The catalysed reaction is orotidine 5'-phosphate + diphosphate = orotate + 5-phospho-alpha-D-ribose 1-diphosphate. The protein operates within pyrimidine metabolism; UMP biosynthesis via de novo pathway; UMP from orotate: step 1/2. Functionally, catalyzes the transfer of a ribosyl phosphate group from 5-phosphoribose 1-diphosphate to orotate, leading to the formation of orotidine monophosphate (OMP). The chain is Orotate phosphoribosyltransferase from Bradyrhizobium sp. (strain ORS 278).